Here is a 72-residue protein sequence, read N- to C-terminus: MAQHSKYSDAQLSAIVNDMIAVLEKHKAPVDLSLIALGNMASNLLTTSVPQTQCEALAQAFSNSLINAVKTR.

Belongs to the UPF0352 family.

In Haemophilus influenzae (strain ATCC 51907 / DSM 11121 / KW20 / Rd), this protein is UPF0352 protein HI_0840.